The primary structure comprises 243 residues: Terpene cyclase ptmB (243 aa).

The next 3 helical transmembrane spans lie at 19-39, 48-68, and 78-98; these read IANL…VGMI, YGMA…YSLI, and GVFI…IKFA. An N-linked (GlcNAc...) asparagine glycan is attached at asparagine 111. Transmembrane regions (helical) follow at residues 112–132, 137–157, 172–194, and 205–225; these read LSLI…ALAA, SLAY…GGLC, LWLS…WMYW, and LVLW…ICYW.

The protein belongs to the paxB family.

It is found in the membrane. Its pathway is secondary metabolite biosynthesis. Terpene cyclase; part of the gene cluster that mediates the biosynthesis of the indole diterpenes penitrems. The geranylgeranyl diphosphate (GGPP) synthase ptmG catalyzes the first step in penitrem biosynthesis via conversion of farnesyl pyrophosphate and isopentyl pyrophosphate into geranylgeranyl pyrophosphate (GGPP). Condensation of indole-3-glycerol phosphate with GGPP by the prenyl transferase ptmC then forms 3-geranylgeranylindole (3-GGI). Epoxidation by the FAD-dependent monooxygenase ptmM leads to a epoxidized-GGI that is substrate of the terpene cyclase ptmB for cyclization to yield paspaline. Paspaline is subsequently converted to 13-desoxypaxilline by the cytochrome P450 monooxygenase ptmP, the latter being then converted to paxilline by the cytochrome P450 monooxygenase ptmQ. Paxilline is converted to beta-paxitriol via C-10 ketoreduction by the short-chain dehydrogenase ptmH which can be monoprenylated at the C-20 by the indole diterpene prenyltransferase ptmD. A two-step elimination (acetylation and elimination) process performed by the O-acetyltransferase ptmV and ptmI leads to the production of the prenylated form of penijanthine. The FAD-linked oxidoreductase ptmO then converts the prenylated form of penijanthine into PC-M5 which is in turn transformed into PC-M4 by the aromatic dimethylallyltransferase ptmE. Five sequential oxidative transformations performed by the cytochrome P450 monooxygenases ptmK, ptmU, ptmL, ptmN and ptmJ yield the various penitrem compounds. PtmK, ptmU and ptmM are involved in the formation of the key bicyclic ring of penitrem C via the formation of the intermediates secopenitrem D and penitrem D. PtmL catalyzes the epoxidation of penitrem D and C to yield penitrem B and F, respectively. PtmJ catalyzes the last benzylic hydroxylation to convert penitrem B to prenitrem E and penitrem F to penitrem A. In Penicillium ochrochloron, this protein is Terpene cyclase ptmB.